The following is a 90-amino-acid chain: Putative regulatory protein Dred_1699 (90 aa).

The protein belongs to the RemA family.

The chain is Putative regulatory protein Dred_1699 from Desulforamulus reducens (strain ATCC BAA-1160 / DSM 100696 / MI-1) (Desulfotomaculum reducens).